The following is a 320-amino-acid chain: Thymidine kinase (320 aa).

An ATP-binding site is contributed by Gly10–Ser17. Catalysis depends on Glu33, which acts as the Proton acceptor. Positions 51 and 75 each coordinate substrate. Arg162 contacts ATP. Arg168 is a binding site for substrate.

It belongs to the herpesviridae thymidine kinase family. In terms of assembly, homodimer.

The enzyme catalyses thymidine + ATP = dTMP + ADP + H(+). Functionally, catalyzes the transfer of the gamma-phospho group of ATP to thymidine to generate dTMP in the salvage pathway of pyrimidine synthesis. The dTMP serves as a substrate for DNA polymerase during viral DNA replication. Allows the virus to be reactivated and to grow in non-proliferative cells lacking a high concentration of phosphorylated nucleic acid precursors. The polypeptide is Thymidine kinase (Suid herpesvirus 1 (strain NIA-3) (SuHV-1)).